A 295-amino-acid polypeptide reads, in one-letter code: HTH-type transcriptional regulator TrpI (295 aa).

Residues Pro6 to Thr63 form the HTH lysR-type domain. Residues Ile23–Arg42 constitute a DNA-binding region (H-T-H motif).

The protein belongs to the LysR transcriptional regulatory family. As to quaternary structure, homotetramer.

Activates the expression of the trpBA genes, which encode the two tryptophan synthase subunits, and represses initiation at its own promoter. Acts by binding to two adjacent sites in the intergenic region. In the absence of the inducer indoleglycerol phosphate (InGP), TrpI binds to site I. In the presence of InGP, TrpI binds to site I and site II. Binding to site II is site I dependent. InGP strongly stimulates binding to site II and is required for maximal activation of trpBA. This is HTH-type transcriptional regulator TrpI from Pseudomonas aeruginosa (strain ATCC 15692 / DSM 22644 / CIP 104116 / JCM 14847 / LMG 12228 / 1C / PRS 101 / PAO1).